Consider the following 428-residue polypeptide: Serine--tRNA ligase (428 aa).

Residue 234-236 participates in L-serine binding; it reads TAE. 265-267 contributes to the ATP binding site; sequence RRE. Glu288 provides a ligand contact to L-serine. 352-355 serves as a coordination point for ATP; sequence EISS. L-serine is bound at residue Ser388.

It belongs to the class-II aminoacyl-tRNA synthetase family. Type-1 seryl-tRNA synthetase subfamily. In terms of assembly, homodimer. The tRNA molecule binds across the dimer.

It is found in the cytoplasm. It catalyses the reaction tRNA(Ser) + L-serine + ATP = L-seryl-tRNA(Ser) + AMP + diphosphate + H(+). The catalysed reaction is tRNA(Sec) + L-serine + ATP = L-seryl-tRNA(Sec) + AMP + diphosphate + H(+). Its pathway is aminoacyl-tRNA biosynthesis; selenocysteinyl-tRNA(Sec) biosynthesis; L-seryl-tRNA(Sec) from L-serine and tRNA(Sec): step 1/1. Its function is as follows. Catalyzes the attachment of serine to tRNA(Ser). Is also able to aminoacylate tRNA(Sec) with serine, to form the misacylated tRNA L-seryl-tRNA(Sec), which will be further converted into selenocysteinyl-tRNA(Sec). This is Serine--tRNA ligase from Synechococcus elongatus (strain ATCC 33912 / PCC 7942 / FACHB-805) (Anacystis nidulans R2).